A 344-amino-acid polypeptide reads, in one-letter code: N-acetyl-gamma-glutamyl-phosphate reductase (344 aa).

Cysteine 148 is an active-site residue.

It belongs to the NAGSA dehydrogenase family. Type 1 subfamily.

It localises to the cytoplasm. The enzyme catalyses N-acetyl-L-glutamate 5-semialdehyde + phosphate + NADP(+) = N-acetyl-L-glutamyl 5-phosphate + NADPH + H(+). It participates in amino-acid biosynthesis; L-arginine biosynthesis; N(2)-acetyl-L-ornithine from L-glutamate: step 3/4. In terms of biological role, catalyzes the NADPH-dependent reduction of N-acetyl-5-glutamyl phosphate to yield N-acetyl-L-glutamate 5-semialdehyde. In Clostridium kluyveri (strain NBRC 12016), this protein is N-acetyl-gamma-glutamyl-phosphate reductase.